A 328-amino-acid polypeptide reads, in one-letter code: Thiamine-monophosphate kinase (328 aa).

The Mg(2+) site is built by Asp30, Thr45, Thr46, and Asp47. His54 contacts substrate. Mg(2+) is bound by residues Asp75 and Asp122. ATP is bound by residues 121-122 (GD) and Arg146. A Mg(2+)-binding site is contributed by Asp211. Ser213 is an ATP binding site. Asp214 provides a ligand contact to Mg(2+). Substrate contacts are provided by Glu262 and Phe321.

It belongs to the thiamine-monophosphate kinase family.

The catalysed reaction is thiamine phosphate + ATP = thiamine diphosphate + ADP. Its pathway is cofactor biosynthesis; thiamine diphosphate biosynthesis; thiamine diphosphate from thiamine phosphate: step 1/1. In terms of biological role, catalyzes the ATP-dependent phosphorylation of thiamine-monophosphate (TMP) to form thiamine-pyrophosphate (TPP), the active form of vitamin B1. The chain is Thiamine-monophosphate kinase from Haemophilus influenzae (strain ATCC 51907 / DSM 11121 / KW20 / Rd).